We begin with the raw amino-acid sequence, 544 residues long: Chaperonin GroEL (544 aa).

ATP contacts are provided by residues 29–32 (TLGP), 86–90 (DGTTT), G413, 476–478 (NAA), and D492.

Belongs to the chaperonin (HSP60) family. Forms a cylinder of 14 subunits composed of two heptameric rings stacked back-to-back. Interacts with the co-chaperonin GroES.

It localises to the cytoplasm. The enzyme catalyses ATP + H2O + a folded polypeptide = ADP + phosphate + an unfolded polypeptide.. In terms of biological role, together with its co-chaperonin GroES, plays an essential role in assisting protein folding. The GroEL-GroES system forms a nano-cage that allows encapsulation of the non-native substrate proteins and provides a physical environment optimized to promote and accelerate protein folding. This is Chaperonin GroEL from Bacillus cereus (strain B4264).